An 8384-amino-acid polypeptide reads, in one-letter code: Mucin-19 (8384 aa).

A signal peptide spans 1-21; that stretch reads MKLILWYLVVALWCFFKDVEA. Disordered stretches follow at residues 33–197, 222–247, 279–305, and 332–467; these read AASR…YGAG, SKADGRETRGSGSAGGETIVFGPDAG, GDTGISSKTVEGNQTSSSGGSVSIDLG, and QEGF…PEAT. Composition is skewed to low complexity over residues 35–48 and 88–98; these read SRSGGFSYGSSSSG and GGFFNSSSSSG. Over residues 169–184 the composition is skewed to basic and acidic residues; sequence DKSRERWDAGNSRSED. A compositionally biased stretch (polar residues) spans 187–197; sequence ADSTNTRYGAG. Over residues 279–299 the composition is skewed to polar residues; sequence GDTGISSKTVEGNQTSSSGGS. The span at 359–369 shows a compositional bias: low complexity; that stretch reads GSDSSSSGDSS. The segment covering 370–381 has biased composition (polar residues); sequence ARNGFENSSGIS. Low complexity-rich tracts occupy residues 424 to 435 and 443 to 452; these read SDSGGNTWSSDS and TSSSEYSTSG. 3 VWFD domains span residues 478-649, 815-995, and 1274-1447; these read GEIS…QHCN, GRCK…SSCI, and TICH…QECS. 8 disulfides stabilise this stretch: Cys502–Cys648, Cys817–Cys952, Cys838–Cys994, Cys857–Cys865, Cys1276–Cys1411, Cys1298–Cys1446, Cys1307–Cys1408, and Cys1323–Cys1330. 27 disordered regions span residues 1680 to 1699, 1732 to 2464, 2484 to 2526, 2540 to 2827, 2850 to 2917, 2984 to 3027, 3075 to 3368, 3386 to 3428, 3585 to 3628, 3667 to 3736, 4105 to 4147, 4187 to 4251, 4315 to 4390, 4414 to 4455, 4510 to 4583, 4790 to 4843, 4895 to 4930, 5130 to 5161, 5429 to 5452, 5464 to 5494, 5880 to 5918, 6069 to 6403, 6440 to 6918, 6953 to 7223, 7250 to 7749, 7783 to 7975, and 8020 to 8133; these read TSSSETTGTTLGPLTEPFTT, AGTT…KSPG, LESE…TEGS, RPLD…MTGT, STVG…LGTI, VTTG…SGTT, GTTG…GKTG, TTRL…GKTG, ETTG…TNGL, GSSA…TGLP, TGSS…NGLS, SAGV…AEVT, GLSA…SARV, TGSS…TNGQ, TGTT…TGLP, SSAGVTGTNGLSAEATETTGPSAGVTGTTGLSAGVT, TGTTGPSAEETGATGPSAEVTGTTGPSGGVTG, VTGTTELSAEVTEKTGPSAEVTGK, GPSAEVTGTTGSSAGVTGTTGPSAGVTGTTG, GTSIPLTGKTGTTRTSVEESTTTGPSAGITGTNGLSAEM, TGKT…STES, GRAT…ETTK, GTSE…TGFK, SFST…SKTG, KNGS…EAGS, and SGRS…VSQP. Composition is skewed to low complexity over residues 1732-1746, 1772-1813, and 1820-1833; these read AGTTGGVDAATTGAA, PGEA…TTGP, and GATSSEATSSEGMS. The segment covering 1835 to 1860 has biased composition (polar residues); that stretch reads VTGQSLGSTAGSDSEITAKTSFTGSS. Over residues 1868–1879 the composition is skewed to low complexity; sequence PSPGSPGHFSGG. The span at 1880–1905 shows a compositional bias: polar residues; it reads TTEWGNVATTGAAGENTSGALGSTEG. Residues 1909–1921 are compositionally biased toward low complexity; the sequence is ATTSAGSGNTAGT. Positions 1950 to 1968 are enriched in polar residues; the sequence is GSSTPGEADIGNTSFGKSG. Low complexity-rich tracts occupy residues 1969–1983 and 2013–2049; these read TPTVSAASTTSSPVS and GGKITSGWSSSGTSTGASNTPGATGSSTGQTDTSGPS. The span at 2055 to 2100 shows a compositional bias: polar residues; that stretch reads NYGQSSEIPGTIKSSSDVSGTMGQSDTTSGPSVAVTRTSEQSSGVT. Composition is skewed to low complexity over residues 2132-2147 and 2159-2170; these read TTGSSAEGSGTTGPSS and GSGTSGQSVTGS. Polar residues-rich tracts occupy residues 2171–2186 and 2209–2225; these read RATGLSATELGTTVSF and GSGTTGPSVVRSGTTRL. Low complexity-rich tracts occupy residues 2233–2246 and 2280–2313; these read TESSPGVTGTTTPS and SGPSVVGSGTTGPTSAGLGTTAPSTRRSSTTKPS. Residues 2238–6086 are approximate repeats of G-V-T-G-T-T-G-P-S-A; it reads GVTGTTTPSA…GVTGTTGLSA (3849 aa). Composition is skewed to polar residues over residues 2316–2332 and 2354–2372; these read RTGTTGQSGAESGTTEP and ATESSTSRPLGETTGTTIP. The segment covering 2403 to 2419 has biased composition (gly residues); that stretch reads SSGGSGATRSSGGGMGT. The span at 2420–2441 shows a compositional bias: low complexity; it reads TGQSTARSETTGPLFGLTGTFG. A compositionally biased stretch (polar residues) spans 2442 to 2460; it reads QSATVTGTSSNSAGVTTPE. Composition is skewed to low complexity over residues 2512–2526, 2545–2571, and 2578–2589; these read SAGETGTTEPSTEGS, GSGTTGTLSGGSSTTRSSDGTTGTTRK, and TTGLSGLTGTSG. 2 stretches are compositionally biased toward polar residues: residues 2595-2610 and 2638-2653; these read TGTSSKSAGVTVTSEK and TRPSGGVTVTSGQSAR. Residues 2654–2681 are compositionally biased toward low complexity; the sequence is VTETVGASAGVTGTTGPSTEGSGATGPS. 2 stretches are compositionally biased toward polar residues: residues 2695–2748 and 2755–2770; these read SGTT…TGTT and TETTRPSVVKSGTTGP. Residues 2787–2799 are compositionally biased toward low complexity; that stretch reads ATRSSGGETETTG. Polar residues-rich tracts occupy residues 2800-2827, 2850-2859, and 2874-2892; these read QSAVKSGTTESFTRLTRTSGQSAGMTGT, STVGLETTRP, and AQTTGPSAGVTVTSGQSAR. Residues 2894–2910 are compositionally biased toward low complexity; the sequence is TGASGPSVGVTGTTGPA. Residues 2984–2998 show a composition bias toward polar residues; it reads VTTGPSVTGVETTAK. Low complexity predominate over residues 2999–3027; sequence TTSGGLSTTISSVGGTGTTGQSPERSGTT. A compositionally biased stretch (polar residues) spans 3099-3109; that stretch reads PSITGSGTTRP. Residues 3114–3130 are compositionally biased toward low complexity; it reads SWTAGTSSGGHSTTSPS. Polar residues predominate over residues 3131–3159; it reads VRGTETTGQSAAESVTTGPVTGYTETSGP. The span at 3172–3188 shows a compositional bias: low complexity; that stretch reads TVTQTTGSSAAVSGTTV. A compositionally biased stretch (polar residues) spans 3189–3224; it reads QSLTVSGTTRPSSGQTEITGSSVKESGTTESSAVRS. Low complexity predominate over residues 3225-3277; sequence GTTGPTAGVTGTNGPSSAGVTGITGSSPGVTGTTGSSPGVTGTTGSSARSGTS. Composition is skewed to polar residues over residues 3303 to 3317 and 3324 to 3362; these read ITGTNGLSAEVTGTT and TGTTGPSAGVTRTTGLSAGETGTTGLSPGVTRTTRSSAG. The span at 3390–3417 shows a compositional bias: low complexity; the sequence is SAGVTGTTGPSPGVTGTTGTPAGVTGTT. Polar residues-rich tracts occupy residues 3702–3728 and 4105–4116; these read VTGTTGLSPGVTGTSGLSAEVTGTTGP and TGSSARSGTSIP. The span at 4117-4126 shows a compositional bias: low complexity; the sequence is SVGETGTTRT. The segment covering 4320-4346 has biased composition (polar residues); the sequence is VTGTTRPSAGVTGTTGQSAEVTGTTEP. 2 stretches are compositionally biased toward low complexity: residues 4347-4385 and 4414-4426; these read SAGLTETTGSSTGVTGATGPLAGVTGTTGISTEVTGTTG and TGSSARSGTSTPS. Low complexity-rich tracts occupy residues 5469–5494 and 5889–5903; these read VTGTTGSSAGVTGTTGPSAGVTGTTG and TGTTRTSVEESTTTG. 3 stretches are compositionally biased toward polar residues: residues 5908 to 5918, 6071 to 6103, and 6111 to 6121; these read ITGTNGLSAEM, KTRSSAGVTGTTGLSAKSGTSIPSAGKTGTTKT, and TRPSAGITATT. The segment covering 6156–6168 has biased composition (low complexity); sequence TTTGTTGVTTGTT. Composition is skewed to polar residues over residues 6217-6248 and 6257-6275; these read EVSTISEVSNTGITGVGSETSIETGISNTATT and APGSSSTEATTSIGGSAST. Residues 6284–6295 show a composition bias toward low complexity; it reads TGSTRGVRTTGS. Polar residues-rich tracts occupy residues 6303–6323 and 6336–6346; these read GEFSGTTISSGGFHTEATTLT and ESTTSLPQSAK. The span at 6378 to 6389 shows a compositional bias: low complexity; it reads SGTTISSGGSHT. 2 stretches are compositionally biased toward polar residues: residues 6440 to 6457 and 6470 to 6503; these read GRATGATTSIAGSDTSQA and TTITSGDSHTEATALTGSRGSIGTESTVETTTYI. Residues 6507-6523 show a composition bias toward low complexity; sequence GTTRGGLATATTGAFSG. The span at 6560–6571 shows a compositional bias: polar residues; it reads TTFTSGGSHTEA. Low complexity predominate over residues 6581–6597; it reads TGTESRAATTRAAPGTT. The segment covering 6599 to 6608 has biased composition (polar residues); sequence VPGSSNTGAT. Residues 6612 to 6628 show a composition bias toward low complexity; it reads GGSATTRGRITTATTGA. 2 stretches are compositionally biased toward polar residues: residues 6669-6680 and 6689-6698; these read RITSGGSYTATT and APGSSNTGAT. The segment covering 6707-6718 has biased composition (low complexity); it reads TRGRITTATTGA. Over residues 6752–6766 the composition is skewed to polar residues; the sequence is TTLTGDRSSTGSESR. The span at 6767 to 6781 shows a compositional bias: low complexity; sequence TATTGVAPGTTVAPG. A compositionally biased stretch (polar residues) spans 6794–6817; the sequence is SGTTNIGRATGATTSIVGSDTSQA. Residues 6827–6842 are compositionally biased toward low complexity; it reads SPGASSTSQSSRPGTS. Over residues 6843 to 6875 the composition is skewed to polar residues; it reads VTPDSSASESETVTTKEFSGTTAISRTSHTGTP. Residues 6887-6901 show a composition bias toward low complexity; that stretch reads TATTGVAPGTTVAPG. Polar residues-rich tracts occupy residues 6902-6911 and 6953-6964; these read SSNTEATTSV and GTSEVAPSTTVA. Low complexity predominate over residues 6966 to 6994; sequence GSFSTAATTSPGASGTTGVTTTTKTTTSL. Residues 7006-7041 show a composition bias toward polar residues; it reads SATTGAPGSRTGTAGVPSATTVSPGSSNSEATTSVG. Positions 7045–7074 are enriched in low complexity; the sequence is KTGAETITEATTSTEGTGTSGTGFKTGTSE. Residues 7085 to 7094 show a composition bias toward polar residues; sequence SFSTAATTSP. Residues 7095 to 7112 show a composition bias toward low complexity; sequence GASGMTGVTTTTKTTTSL. Over residues 7143–7158 the composition is skewed to polar residues; that stretch reads TRVTPGSSNSEATTSV. 2 stretches are compositionally biased toward low complexity: residues 7201–7215 and 7250–7276; these read SGSSNTEATTSTEGT and SFSTATTSSGASGITRAGPTSETTTSL. Polar residues predominate over residues 7293–7311; the sequence is SGTTVAPGSSNSEATTSVG. The span at 7379-7397 shows a compositional bias: low complexity; that stretch reads TTSTKGTGTSGTGFKTGTS. The segment covering 7403–7421 has biased composition (polar residues); it reads TTVSPGSFSTATISPGASR. A compositionally biased stretch (low complexity) spans 7422-7435; it reads TTGAAPAAETTTSL. Positions 7465–7483 are enriched in polar residues; it reads SATTIAPGSSNSEATTSLG. The segment covering 7525 to 7537 has biased composition (gly residues); it reads PLGGASGTSGGYV. Composition is skewed to polar residues over residues 7544–7557 and 7571–7596; these read PTTSIEETGTSRTI and AGTSVVAPSTTVAPGSFSTAATTSPG. A compositionally biased stretch (low complexity) spans 7600–7613; it reads MTGVRTTSKTTTSL. Polar residues-rich tracts occupy residues 7642 to 7669 and 7698 to 7708; these read SSRTTILSGSSNTEATNSIEETGTSGTG and SFSTAATTSPG. Positions 7715–7732 are enriched in low complexity; sequence TGPTAETTTFLGGSSTTG. Over residues 7783–7811 the composition is skewed to polar residues; sequence KNGSMTTALGSQLSSSQTVIPGSSGTISH. Over residues 7812–7828 the composition is skewed to low complexity; that stretch reads TTVAPGSSVTGTTTGAS. Over residues 7830-7851 the composition is skewed to polar residues; that stretch reads DQVTGSKTGTTGVALSTTVAPG. Low complexity predominate over residues 7852 to 7861; sequence SSSTEATTST. A compositionally biased stretch (polar residues) spans 7862-7891; sequence GVHRTTVVGQKTGATTRGSAKQGTRSTIEA. Low complexity predominate over residues 7892–7917; it reads TTSFRGTGTTGSGMNTGTTGVVSGNT. Residues 7918 to 7934 are compositionally biased toward polar residues; that stretch reads ISPSSFNTEATSGTSER. Positions 7938-7952 are enriched in low complexity; sequence GSEIGTTGIVSGTTV. Composition is skewed to polar residues over residues 7953–7965, 8020–8040, 8048–8081, and 8110–8120; these read APGSSNTEATTSL, SGRSQPTGSKTGYTVTGSGTT, TGNTPGSTGVTSSQEGTTVVSSGITGIPETSISG, and ETGVQTGSTLV. The 67-residue stretch at 8159-8225 folds into the VWFC domain; it reads PVCHGPLGEE…DTCCEIGYCE (67 aa). 4 disulfide bridges follow: Cys8288–Cys8339, Cys8306–Cys8353, Cys8315–Cys8369, and Cys8319–Cys8371. Residues 8288 to 8376 enclose the CTCK domain; sequence CKNNCRSSLV…TTCSCLDICQ (89 aa).

Expressed corneal epithelial cells, conjunctival goblet and epithelial cells and lacrimal gland cells (at protein level). Expressed by mucous cells of the submandibular gland and submucosal gland of the trachea. Expressed by middle ear epithelial cells.

Its subcellular location is the secreted. In terms of biological role, may function in ocular mucus homeostasis. This chain is Mucin-19 (MUC19), found in Homo sapiens (Human).